Consider the following 171-residue polypeptide: Secreted protein CSS3 (171 aa).

The first 20 residues, Met1–Ala20, serve as a signal peptide directing secretion. N-linked (GlcNAc...) asparagine glycosylation is found at Asn37, Asn139, and Asn159.

Its subcellular location is the cytoplasm. It is found in the secreted. The protein is Secreted protein CSS3 of Saccharomyces cerevisiae (strain ATCC 204508 / S288c) (Baker's yeast).